Reading from the N-terminus, the 155-residue chain is Small ribosomal subunit protein uS17 (155 aa).

An N-acetylalanine modification is found at A2.

The protein belongs to the universal ribosomal protein uS17 family.

This is Small ribosomal subunit protein uS17 from Drosophila yakuba (Fruit fly).